The following is a 194-amino-acid chain: ATP-dependent Clp protease proteolytic subunit 3 (194 aa).

The Nucleophile role is filled by Ser-96. Residue His-121 is part of the active site.

It belongs to the peptidase S14 family. Fourteen ClpP subunits assemble into 2 heptameric rings which stack back to back to give a disk-like structure with a central cavity, resembling the structure of eukaryotic proteasomes.

Its subcellular location is the cytoplasm. It catalyses the reaction Hydrolysis of proteins to small peptides in the presence of ATP and magnesium. alpha-casein is the usual test substrate. In the absence of ATP, only oligopeptides shorter than five residues are hydrolyzed (such as succinyl-Leu-Tyr-|-NHMec, and Leu-Tyr-Leu-|-Tyr-Trp, in which cleavage of the -Tyr-|-Leu- and -Tyr-|-Trp bonds also occurs).. Cleaves peptides in various proteins in a process that requires ATP hydrolysis. Has a chymotrypsin-like activity. Plays a major role in the degradation of misfolded proteins. The polypeptide is ATP-dependent Clp protease proteolytic subunit 3 (Rhizobium etli (strain ATCC 51251 / DSM 11541 / JCM 21823 / NBRC 15573 / CFN 42)).